The sequence spans 349 residues: Isopentenyl-diphosphate delta-isomerase (349 aa).

A substrate-binding site is contributed by 9–10 (RK). Residues 65 to 67 (AMT), Ser95, and Asn124 each bind FMN. 95–97 (STH) contacts substrate. Gln154 contributes to the substrate binding site. Residue Glu155 coordinates Mg(2+). Residues Lys186, Ser211, Thr216, 262–264 (GVR), and 283–284 (SR) each bind FMN.

This sequence belongs to the IPP isomerase type 2 family. In terms of assembly, homooctamer. Dimer of tetramers. FMN is required as a cofactor. It depends on NADPH as a cofactor. Mg(2+) serves as cofactor.

The protein localises to the cytoplasm. It carries out the reaction isopentenyl diphosphate = dimethylallyl diphosphate. In terms of biological role, involved in the biosynthesis of isoprenoids. Catalyzes the 1,3-allylic rearrangement of the homoallylic substrate isopentenyl (IPP) to its allylic isomer, dimethylallyl diphosphate (DMAPP). This Staphylococcus haemolyticus (strain JCSC1435) protein is Isopentenyl-diphosphate delta-isomerase.